A 269-amino-acid chain; its full sequence is 4-hydroxy-tetrahydrodipicolinate reductase (269 aa).

NAD(+) contacts are provided by residues 8–13, Glu34, 98–100, and 122–125; these read GASGRM, GTT, and APNM. The Proton donor/acceptor role is filled by His155. His156 is a binding site for (S)-2,3,4,5-tetrahydrodipicolinate. Catalysis depends on Lys159, which acts as the Proton donor. 165–166 contributes to the (S)-2,3,4,5-tetrahydrodipicolinate binding site; sequence GT.

Belongs to the DapB family.

The protein localises to the cytoplasm. The enzyme catalyses (S)-2,3,4,5-tetrahydrodipicolinate + NAD(+) + H2O = (2S,4S)-4-hydroxy-2,3,4,5-tetrahydrodipicolinate + NADH + H(+). It carries out the reaction (S)-2,3,4,5-tetrahydrodipicolinate + NADP(+) + H2O = (2S,4S)-4-hydroxy-2,3,4,5-tetrahydrodipicolinate + NADPH + H(+). It functions in the pathway amino-acid biosynthesis; L-lysine biosynthesis via DAP pathway; (S)-tetrahydrodipicolinate from L-aspartate: step 4/4. In terms of biological role, catalyzes the conversion of 4-hydroxy-tetrahydrodipicolinate (HTPA) to tetrahydrodipicolinate. This is 4-hydroxy-tetrahydrodipicolinate reductase from Desulfotalea psychrophila (strain LSv54 / DSM 12343).